Here is a 396-residue protein sequence, read N- to C-terminus: CCA-adding enzyme (396 aa).

ATP is bound by residues G27 and R30. Positions 27 and 30 each coordinate CTP. Mg(2+) is bound by residues D40 and D42. ATP-binding residues include R111, D154, R157, R160, and R163. 5 residues coordinate CTP: R111, D154, R157, R160, and R163.

Belongs to the tRNA nucleotidyltransferase/poly(A) polymerase family. Bacterial CCA-adding enzyme type 3 subfamily. In terms of assembly, homodimer. Mg(2+) serves as cofactor.

It catalyses the reaction a tRNA precursor + 2 CTP + ATP = a tRNA with a 3' CCA end + 3 diphosphate. It carries out the reaction a tRNA with a 3' CCA end + 2 CTP + ATP = a tRNA with a 3' CCACCA end + 3 diphosphate. In terms of biological role, catalyzes the addition and repair of the essential 3'-terminal CCA sequence in tRNAs without using a nucleic acid template. Adds these three nucleotides in the order of C, C, and A to the tRNA nucleotide-73, using CTP and ATP as substrates and producing inorganic pyrophosphate. tRNA 3'-terminal CCA addition is required both for tRNA processing and repair. Also involved in tRNA surveillance by mediating tandem CCA addition to generate a CCACCA at the 3' terminus of unstable tRNAs. While stable tRNAs receive only 3'-terminal CCA, unstable tRNAs are marked with CCACCA and rapidly degraded. The polypeptide is CCA-adding enzyme (Pediococcus pentosaceus (strain ATCC 25745 / CCUG 21536 / LMG 10740 / 183-1w)).